The chain runs to 163 residues: Ribonuclease P protein subunit p25-like protein (163 aa).

Disordered regions lie at residues 1 to 22 and 129 to 163; these read MEHYRKAGSVELPAPSPMPQLP and NECGYQPPGAPPGLGSMPSSSCGPRSRRRARDTRS. Over residues 143–152 the composition is skewed to low complexity; it reads GSMPSSSCGP. The segment covering 153 to 163 has biased composition (basic residues); sequence RSRRRARDTRS.

It belongs to the histone-like Alba family.

It is found in the nucleus. In terms of biological role, may be a component of ribonuclease P or MRP. The polypeptide is Ribonuclease P protein subunit p25-like protein (RPP25L) (Homo sapiens (Human)).